A 100-amino-acid chain; its full sequence is Urease subunit gamma (100 aa).

This sequence belongs to the urease gamma subunit family. Heterotrimer of UreA (gamma), UreB (beta) and UreC (alpha) subunits. Three heterotrimers associate to form the active enzyme.

Its subcellular location is the cytoplasm. The enzyme catalyses urea + 2 H2O + H(+) = hydrogencarbonate + 2 NH4(+). It functions in the pathway nitrogen metabolism; urea degradation; CO(2) and NH(3) from urea (urease route): step 1/1. In Teredinibacter turnerae (strain ATCC 39867 / T7901), this protein is Urease subunit gamma.